Reading from the N-terminus, the 708-residue chain is Ion-translocating oxidoreductase complex subunit C (708 aa).

2 4Fe-4S ferredoxin-type domains span residues Gly-369–Tyr-397 and Lys-407–Phe-436. Positions 377, 380, 383, 387, 416, 419, 422, and 426 each coordinate [4Fe-4S] cluster. The disordered stretch occupies residues Ala-630–Pro-682.

It belongs to the 4Fe4S bacterial-type ferredoxin family. RnfC subfamily. In terms of assembly, the complex is composed of six subunits: RsxA, RsxB, RsxC, RsxD, RsxE and RsxG. [4Fe-4S] cluster is required as a cofactor.

The protein localises to the cell inner membrane. Its function is as follows. Part of a membrane-bound complex that couples electron transfer with translocation of ions across the membrane. Required to maintain the reduced state of SoxR. In Escherichia coli (strain UTI89 / UPEC), this protein is Ion-translocating oxidoreductase complex subunit C.